The sequence spans 867 residues: Alanine--tRNA ligase (867 aa).

4 residues coordinate Zn(2+): histidine 555, histidine 559, cysteine 657, and histidine 661.

This sequence belongs to the class-II aminoacyl-tRNA synthetase family. It depends on Zn(2+) as a cofactor.

It is found in the cytoplasm. It carries out the reaction tRNA(Ala) + L-alanine + ATP = L-alanyl-tRNA(Ala) + AMP + diphosphate. Its function is as follows. Catalyzes the attachment of alanine to tRNA(Ala) in a two-step reaction: alanine is first activated by ATP to form Ala-AMP and then transferred to the acceptor end of tRNA(Ala). Also edits incorrectly charged Ser-tRNA(Ala) and Gly-tRNA(Ala) via its editing domain. This is Alanine--tRNA ligase from Psychromonas ingrahamii (strain DSM 17664 / CCUG 51855 / 37).